Consider the following 470-residue polypeptide: 1-aminocyclopropane-1-carboxylate synthase 9 (470 aa).

Substrate contacts are provided by Glu-47 and Tyr-85. Residue Lys-272 is modified to N6-(pyridoxal phosphate)lysine.

The protein belongs to the class-I pyridoxal-phosphate-dependent aminotransferase family. As to quaternary structure, homodimer and heterodimer. In vivo, the relevance of heterodimerization with other ACS enzymes is however unsure. Interacts (via its C-terminal region) with FEI1, FEI2, ETO1 and EOL1. Pyridoxal 5'-phosphate serves as cofactor. May be processed at its C-terminus. In terms of tissue distribution, expressed in roots and siliques.

It carries out the reaction S-adenosyl-L-methionine = 1-aminocyclopropane-1-carboxylate + S-methyl-5'-thioadenosine + H(+). The protein operates within alkene biosynthesis; ethylene biosynthesis via S-adenosyl-L-methionine; ethylene from S-adenosyl-L-methionine: step 1/2. Its function is as follows. 1-aminocyclopropane-1-carboxylate synthase (ACS) enzymes catalyze the conversion of S-adenosyl-L-methionine (SAM) into 1-aminocyclopropane-1-carboxylate (ACC), a direct precursor of ethylene. This is 1-aminocyclopropane-1-carboxylate synthase 9 (ACS9) from Arabidopsis thaliana (Mouse-ear cress).